A 312-amino-acid polypeptide reads, in one-letter code: MTTNRLQVSLPGLDLKNPIIPASGCFGFGQEYAKYYDLDLLGSIMIKATTLEPRFGNPTPRVAETPAGMLNAIGLQNPGLEVVLAEKLPWLEREYPNLPIIANVAGFSKQEYAAVSHGISKATNVKAIELNISCPNVDHCNHGLLIGQDPDLAYDVVKAAVEASEVPVYVKLTPSVTDIVTVAKAAEDAGASGLTMINTLVGMRFDLKTRKPILANGTGGMSGPAVFPVALKLIRQVAQTTDLPIIGMGGVDSAEAALEMYLAGASAIGVGTANFTNPYACPDIIENLPKVMDKYGISSLEELRQEVKESLR.

FMN contacts are provided by residues Ser23 and 47-48 (KA). Substrate is bound by residues Lys47 and 71–75 (NAIGL). FMN-binding residues include Asn103 and Asn131. Asn131 contributes to the substrate binding site. The Nucleophile role is filled by Cys134. 2 residues coordinate FMN: Lys171 and Ile197. 198-199 (NT) contacts substrate. FMN is bound by residues Gly223, 249 to 250 (GG), and 271 to 272 (GT).

This sequence belongs to the dihydroorotate dehydrogenase family. Type 1 subfamily. Heterotetramer of 2 PyrK and 2 PyrD type B subunits. Requires FMN as cofactor.

It is found in the cytoplasm. The enzyme catalyses (S)-dihydroorotate + NAD(+) = orotate + NADH + H(+). The protein operates within pyrimidine metabolism; UMP biosynthesis via de novo pathway; orotate from (S)-dihydroorotate (NAD(+) route): step 1/1. Its function is as follows. Catalyzes the conversion of dihydroorotate to orotate with NAD(+) as electron acceptor. This chain is Dihydroorotate dehydrogenase B (NAD(+)), catalytic subunit (pyrDB), found in Streptococcus pneumoniae serotype 4 (strain ATCC BAA-334 / TIGR4).